Reading from the N-terminus, the 673-residue chain is UvrABC system protein B (673 aa).

Positions 25-413 (EGIESGLAHQ…GSDIAEQVVR (389 aa)) constitute a Helicase ATP-binding domain. Residue 38–45 (GVTGSGKT) coordinates ATP. Positions 91–114 (YYDYYQPEAYVPTTDTFIEKDASV) match the Beta-hairpin motif. The Helicase C-terminal domain occupies 430-583 (QVDDLLSEIN…QHQYNLDNNI (154 aa)). The UVR domain maps to 634 to 669 (DTKIVELEKLMQGHAQNLEFEQAAAMRDKIAKLRIQ).

It belongs to the UvrB family. Forms a heterotetramer with UvrA during the search for lesions. Interacts with UvrC in an incision complex.

The protein localises to the cytoplasm. The UvrABC repair system catalyzes the recognition and processing of DNA lesions. A damage recognition complex composed of 2 UvrA and 2 UvrB subunits scans DNA for abnormalities. Upon binding of the UvrA(2)B(2) complex to a putative damaged site, the DNA wraps around one UvrB monomer. DNA wrap is dependent on ATP binding by UvrB and probably causes local melting of the DNA helix, facilitating insertion of UvrB beta-hairpin between the DNA strands. Then UvrB probes one DNA strand for the presence of a lesion. If a lesion is found the UvrA subunits dissociate and the UvrB-DNA preincision complex is formed. This complex is subsequently bound by UvrC and the second UvrB is released. If no lesion is found, the DNA wraps around the other UvrB subunit that will check the other stand for damage. This Colwellia psychrerythraea (strain 34H / ATCC BAA-681) (Vibrio psychroerythus) protein is UvrABC system protein B.